A 476-amino-acid chain; its full sequence is Bifunctional protein GlmU (476 aa).

Positions methionine 1–proline 235 are pyrophosphorylase. Residues lysine 23, glutamine 81, glycine 86–threonine 87, serine 108–aspartate 110, glycine 145, glutamate 160, and asparagine 233 contribute to the UDP-N-acetyl-alpha-D-glucosamine site. Aspartate 110 lines the Mg(2+) pocket. Position 233 (asparagine 233) interacts with Mg(2+). Residues alanine 236 to glutamine 256 are linker. The interval glycine 257 to glycine 476 is N-acetyltransferase. UDP-N-acetyl-alpha-D-glucosamine is bound by residues arginine 351 and lysine 369. Histidine 381 (proton acceptor) is an active-site residue. UDP-N-acetyl-alpha-D-glucosamine contacts are provided by tyrosine 384 and asparagine 395. Acetyl-CoA contacts are provided by residues alanine 398, asparagine 404–tyrosine 405, serine 423, glycine 441, and arginine 458.

This sequence in the N-terminal section; belongs to the N-acetylglucosamine-1-phosphate uridyltransferase family. It in the C-terminal section; belongs to the transferase hexapeptide repeat family. In terms of assembly, homotrimer. It depends on Mg(2+) as a cofactor.

It is found in the cytoplasm. The enzyme catalyses alpha-D-glucosamine 1-phosphate + acetyl-CoA = N-acetyl-alpha-D-glucosamine 1-phosphate + CoA + H(+). It carries out the reaction N-acetyl-alpha-D-glucosamine 1-phosphate + UTP + H(+) = UDP-N-acetyl-alpha-D-glucosamine + diphosphate. It participates in nucleotide-sugar biosynthesis; UDP-N-acetyl-alpha-D-glucosamine biosynthesis; N-acetyl-alpha-D-glucosamine 1-phosphate from alpha-D-glucosamine 6-phosphate (route II): step 2/2. The protein operates within nucleotide-sugar biosynthesis; UDP-N-acetyl-alpha-D-glucosamine biosynthesis; UDP-N-acetyl-alpha-D-glucosamine from N-acetyl-alpha-D-glucosamine 1-phosphate: step 1/1. It functions in the pathway bacterial outer membrane biogenesis; LPS lipid A biosynthesis. Functionally, catalyzes the last two sequential reactions in the de novo biosynthetic pathway for UDP-N-acetylglucosamine (UDP-GlcNAc). The C-terminal domain catalyzes the transfer of acetyl group from acetyl coenzyme A to glucosamine-1-phosphate (GlcN-1-P) to produce N-acetylglucosamine-1-phosphate (GlcNAc-1-P), which is converted into UDP-GlcNAc by the transfer of uridine 5-monophosphate (from uridine 5-triphosphate), a reaction catalyzed by the N-terminal domain. The sequence is that of Bifunctional protein GlmU from Acidovorax sp. (strain JS42).